The following is a 214-amino-acid chain: Large ribosomal subunit protein bL25 (214 aa).

A disordered region spans residues 178-214 (VEPEEEELPETDEEGEGAEGEAAEAAEGESAEGESEE). Residues 179-214 (EPEEEELPETDEEGEGAEGEAAEAAEGESAEGESEE) show a composition bias toward acidic residues.

The protein belongs to the bacterial ribosomal protein bL25 family. CTC subfamily. Part of the 50S ribosomal subunit; part of the 5S rRNA/L5/L18/L25 subcomplex. Contacts the 5S rRNA. Binds to the 5S rRNA independently of L5 and L18.

Functionally, this is one of the proteins that binds to the 5S RNA in the ribosome where it forms part of the central protuberance. This chain is Large ribosomal subunit protein bL25, found in Corynebacterium jeikeium (strain K411).